We begin with the raw amino-acid sequence, 65 residues long: Large ribosomal subunit protein bL35 (65 aa).

Residues 1 to 65 (MQKIKTNRSA…KELKRLLPGM (65 aa)) are disordered. Basic residues-rich tracts occupy residues 10 to 19 (AAKRFKRTKS) and 33 to 47 (LTKK…LRKS). Residues 54–65 (NNKELKRLLPGM) are compositionally biased toward basic and acidic residues.

It belongs to the bacterial ribosomal protein bL35 family.

This is Large ribosomal subunit protein bL35 from Desulfosudis oleivorans (strain DSM 6200 / JCM 39069 / Hxd3) (Desulfococcus oleovorans).